A 571-amino-acid polypeptide reads, in one-letter code: MNQTRVFLIFAWLMVAVLLWMEWSREKAAPTPAPTTTSAPAAAQSVPGANPGAIPSAQVPGAPGQAAAQAQASATPASQRVTVTTDVLRLVLDGGRVLDAELLQFPQTKDEGSPPVRLLTEDPAHPYSAISGWASEDRNTPVPGADGFKLVGDTKDFVLAKGQNELQIPFVWTADNGVTIKRTLTVSRNEYAVRFKDEVSNAGAAPWNGYVYRTLDRTPTILSRSMTNPDSFSFNGATWYDNDKKYQRRAFKDYLEDGTLNQNITGGWLAMLQHHFFTAWIPQKDQTAHYVLSQVAGRDLIEARGPAFTVAPGQSTSTEARLWVGPKLVNLIAKEDVPGLDRVVDYSRFSMMAVIGQGLFWVLNQVHKLVGNWGWAIVGLVVLLKLVLYPLSATQYKSGAKMRRFQPRIAQLKERYGDDRQKFQTAMMELYKKEKINPMGGCLPILIQMPIFFALYWVLVESVELRQAPWFGWIQDLTARDPYFILPVINVAVMWFTQKLTPAPGMDPMQQKMMQFMPLVFGVMMAFMPSGLVLYWVVNGGLGLLQQWWMTKRHGGEPVPATTAPAPVKKK.

The helical transmembrane segment at 4–24 threads the bilayer; that stretch reads TRVFLIFAWLMVAVLLWMEWS. The tract at residues 29–78 is disordered; sequence APTPAPTTTSAPAAAQSVPGANPGAIPSAQVPGAPGQAAAQAQASATPAS. Low complexity-rich tracts occupy residues 34 to 43 and 55 to 78; these read PTTTSAPAAA and PSAQ…TPAS. A run of 4 helical transmembrane segments spans residues 369 to 389, 440 to 460, 483 to 503, and 518 to 538; these read LVGN…LVLY, GGCL…WVLV, YFIL…LTPA, and PLVF…YWVV.

It belongs to the OXA1/ALB3/YidC family. Type 1 subfamily. In terms of assembly, interacts with the Sec translocase complex via SecD. Specifically interacts with transmembrane segments of nascent integral membrane proteins during membrane integration.

Its subcellular location is the cell inner membrane. Functionally, required for the insertion and/or proper folding and/or complex formation of integral membrane proteins into the membrane. Involved in integration of membrane proteins that insert both dependently and independently of the Sec translocase complex, as well as at least some lipoproteins. Aids folding of multispanning membrane proteins. The chain is Membrane protein insertase YidC from Stenotrophomonas maltophilia (strain K279a).